Here is a 124-residue protein sequence, read N- to C-terminus: Small ribosomal subunit protein uS12 (124 aa).

Asp89 carries the 3-methylthioaspartic acid modification.

This sequence belongs to the universal ribosomal protein uS12 family. As to quaternary structure, part of the 30S ribosomal subunit. Contacts proteins S8 and S17. May interact with IF1 in the 30S initiation complex.

In terms of biological role, with S4 and S5 plays an important role in translational accuracy. Interacts with and stabilizes bases of the 16S rRNA that are involved in tRNA selection in the A site and with the mRNA backbone. Located at the interface of the 30S and 50S subunits, it traverses the body of the 30S subunit contacting proteins on the other side and probably holding the rRNA structure together. The combined cluster of proteins S8, S12 and S17 appears to hold together the shoulder and platform of the 30S subunit. This is Small ribosomal subunit protein uS12 from Campylobacter hominis (strain ATCC BAA-381 / DSM 21671 / CCUG 45161 / LMG 19568 / NCTC 13146 / CH001A).